Consider the following 467-residue polypeptide: ATP synthase subunit beta (467 aa).

Residue 150–157 (GGAGVGKT) participates in ATP binding.

The protein belongs to the ATPase alpha/beta chains family. In terms of assembly, F-type ATPases have 2 components, CF(1) - the catalytic core - and CF(0) - the membrane proton channel. CF(1) has five subunits: alpha(3), beta(3), gamma(1), delta(1), epsilon(1). CF(0) has three main subunits: a(1), b(2) and c(9-12). The alpha and beta chains form an alternating ring which encloses part of the gamma chain. CF(1) is attached to CF(0) by a central stalk formed by the gamma and epsilon chains, while a peripheral stalk is formed by the delta and b chains.

The protein localises to the cell inner membrane. It catalyses the reaction ATP + H2O + 4 H(+)(in) = ADP + phosphate + 5 H(+)(out). In terms of biological role, produces ATP from ADP in the presence of a proton gradient across the membrane. The catalytic sites are hosted primarily by the beta subunits. The polypeptide is ATP synthase subunit beta (Vibrio parahaemolyticus serotype O3:K6 (strain RIMD 2210633)).